Consider the following 250-residue polypeptide: Proteasome subunit alpha type-7-A (250 aa).

A Glycyl lysine isopeptide (Lys-Gly) (interchain with G-Cter in ubiquitin) cross-link involves residue lysine 62.

Belongs to the peptidase T1A family. In terms of assembly, component of the 20S core complex of the 26S proteasome. The 26S proteasome is composed of a core protease (CP), known as the 20S proteasome, capped at one or both ends by the 19S regulatory particle (RP/PA700). The 20S proteasome core is composed of 28 subunits that are arranged in four stacked rings, resulting in a barrel-shaped structure. The two end rings are each formed by seven alpha subunits, and the two central rings are each formed by seven beta subunits. The catalytic chamber with the active sites is on the inside of the barrel. Interacts with KIN10 and KIN11 SnRK subunits, and with the SKP1A/ASK1 subunit of the SCF E3 ubiquitin ligase complex. In terms of tissue distribution, expressed in roots, leaves and flowers.

The protein localises to the cytoplasm. It is found in the nucleus. In terms of biological role, the proteasome is a multicatalytic proteinase complex which is characterized by its ability to cleave peptides with Arg, Phe, Tyr, Leu, and Glu adjacent to the leaving group at neutral or slightly basic pH. The proteasome has an ATP-dependent proteolytic activity. Mediates the association of the SCF(TIR1) E3 ubiquitin ligase complex with the proteasome. The polypeptide is Proteasome subunit alpha type-7-A (PAD1) (Arabidopsis thaliana (Mouse-ear cress)).